The primary structure comprises 142 residues: Hemoglobin subunit alpha (142 aa).

The Globin domain occupies 2 to 142; the sequence is VLSGEDKSNI…VSTVLTSKYR (141 aa). The residue at position 4 (Ser-4) is a Phosphoserine. N6-succinyllysine occurs at positions 8 and 12. The residue at position 17 (Lys-17) is an N6-acetyllysine; alternate. Lys-17 carries the N6-succinyllysine; alternate modification. Tyr-25 carries the post-translational modification Phosphotyrosine. Ser-36 is modified (phosphoserine). Lys-41 carries the N6-succinyllysine modification. Ser-50 carries the phosphoserine modification. His-59 serves as a coordination point for O2. His-88 lines the heme b pocket. Ser-103 carries the phosphoserine modification. Thr-109 bears the Phosphothreonine mark. Residues Ser-112, Ser-125, and Ser-132 each carry the phosphoserine modification. A phosphothreonine mark is found at Thr-135 and Thr-138. The residue at position 139 (Ser-139) is a Phosphoserine.

It belongs to the globin family. Heterotetramer of two alpha chains and two beta chains. Red blood cells.

Its function is as follows. Involved in oxygen transport from the lung to the various peripheral tissues. In terms of biological role, hemopressin acts as an antagonist peptide of the cannabinoid receptor CNR1. Hemopressin-binding efficiently blocks cannabinoid receptor CNR1 and subsequent signaling. The polypeptide is Hemoglobin subunit alpha (Hba) (Mus musculus (Mouse)).